A 134-amino-acid chain; its full sequence is Cytochrome b5 (134 aa).

Residues 5 to 81 (KKVLGFEEVS…MEKYYIGEID (77 aa)) form the Cytochrome b5 heme-binding domain. Positions 40 and 64 each coordinate heme. Residues 107-127 (FMIKILQFLVPILILGLALVV) traverse the membrane as a helical segment.

Belongs to the cytochrome b5 family.

It localises to the endoplasmic reticulum membrane. The protein localises to the microsome membrane. In terms of biological role, membrane bound hemoprotein which function as an electron carrier for several membrane bound oxygenases. This chain is Cytochrome b5 (CYB5), found in Brassica oleracea var. botrytis (Cauliflower).